Here is a 48-residue protein sequence, read N- to C-terminus: Bacteriocin plantaricin-A (48 aa).

Positions 1 to 25 (MKIQIKGMKQLSNKEMQKIVGGKSS) are excised as a propeptide.

In terms of assembly, active plantaricin A is composed of an alpha chain and a beta chain.

In terms of biological role, this heat stable bacteriocin inhibits the growth of closely related Lactobacillus species. It may act as a pore-forming protein, creating a channel in the cell membrane through a 'barrel stave' mechanism. The chain is Bacteriocin plantaricin-A (plnA) from Lactiplantibacillus plantarum (strain ATCC BAA-793 / NCIMB 8826 / WCFS1) (Lactobacillus plantarum).